A 241-amino-acid chain; its full sequence is Nicotinamide riboside kinase (241 aa).

21 to 29 serves as a coordination point for ATP; it reads GCSSSGKST. Mg(2+) is bound by residues serine 28 and aspartate 47. Catalysis depends on aspartate 47, which acts as the Proton acceptor. Residues 47 to 50, 67 to 68, and aspartate 68 contribute to the substrate site; these read DDFY and WD. Arginine 163 lines the ATP pocket. Arginine 164 serves as a coordination point for substrate. ATP-binding positions include arginine 167, 167-169, and 213-215; these read RGG and DVQ. 169–170 contributes to the substrate binding site; sequence GY.

This sequence belongs to the uridine kinase family. NRK subfamily.

The catalysed reaction is beta-nicotinamide D-riboside + ATP = beta-nicotinamide D-ribonucleotide + ADP + H(+). It catalyses the reaction beta-D-ribosylnicotinate + ATP = nicotinate beta-D-ribonucleotide + ADP + H(+). It participates in cofactor biosynthesis; NAD(+) biosynthesis. Functionally, catalyzes the phosphorylation of nicotinamide riboside (NR) and nicotinic acid riboside (NaR) to form nicotinamide mononucleotide (NMN) and nicotinic acid mononucleotide (NaMN). The sequence is that of Nicotinamide riboside kinase (NRK1) from Eremothecium gossypii (strain ATCC 10895 / CBS 109.51 / FGSC 9923 / NRRL Y-1056) (Yeast).